The primary structure comprises 153 residues: Superoxide dismutase [Cu-Zn] (153 aa).

Positions 45 and 47 each coordinate Cu cation. Residue T53 is modified to Phosphothreonine. C56 and C145 are joined by a disulfide. Residue S59 is modified to Phosphoserine. H62 provides a ligand contact to Cu cation. Residues H62, H70, H79, and D82 each contribute to the Zn(2+) site. H119 lines the Cu cation pocket.

This sequence belongs to the Cu-Zn superoxide dismutase family. As to quaternary structure, homodimer. Cu cation serves as cofactor. Zn(2+) is required as a cofactor.

It is found in the cytoplasm. The catalysed reaction is 2 superoxide + 2 H(+) = H2O2 + O2. In terms of biological role, destroys radicals which are normally produced within the cells and which are toxic to biological systems. The chain is Superoxide dismutase [Cu-Zn] from Drosophila melanogaster (Fruit fly).